The sequence spans 178 residues: C-phycoerythrin class 2 subunit beta (178 aa).

Phycourobilin is bound by residues Cys-50 and Cys-61. (2R,3E)-phycoerythrobilin contacts are provided by Cys-82 and Cys-159.

This sequence belongs to the phycobiliprotein family. Heterodimer of an alpha and a beta chain. In terms of processing, contains two covalently linked phycoerythrobilin chromophores and one covalently linked phycourobilin chromophore.

It is found in the cellular thylakoid membrane. Its function is as follows. Light-harvesting photosynthetic bile pigment-protein from the phycobiliprotein complex. In Synechococcus sp. (strain WH8103), this protein is C-phycoerythrin class 2 subunit beta (mpeB).